The following is an 81-amino-acid chain: Photosystem I iron-sulfur center (81 aa).

4Fe-4S ferredoxin-type domains are found at residues 2–31 (AHSV…MIPW) and 39–68 (IASA…VRVY). The [4Fe-4S] cluster site is built by cysteine 11, cysteine 14, cysteine 17, cysteine 21, cysteine 48, cysteine 51, cysteine 54, and cysteine 58.

As to quaternary structure, the eukaryotic PSI reaction center is composed of at least 11 subunits. [4Fe-4S] cluster is required as a cofactor.

The protein resides in the plastid. It is found in the chloroplast thylakoid membrane. The catalysed reaction is reduced [plastocyanin] + hnu + oxidized [2Fe-2S]-[ferredoxin] = oxidized [plastocyanin] + reduced [2Fe-2S]-[ferredoxin]. Its function is as follows. Apoprotein for the two 4Fe-4S centers FA and FB of photosystem I (PSI); essential for photochemical activity. FB is the terminal electron acceptor of PSI, donating electrons to ferredoxin. The C-terminus interacts with PsaA/B/D and helps assemble the protein into the PSI complex. Required for binding of PsaD and PsaE to PSI. PSI is a plastocyanin-ferredoxin oxidoreductase, converting photonic excitation into a charge separation, which transfers an electron from the donor P700 chlorophyll pair to the spectroscopically characterized acceptors A0, A1, FX, FA and FB in turn. In Zygnema circumcarinatum (Green alga), this protein is Photosystem I iron-sulfur center.